Reading from the N-terminus, the 764-residue chain is 5-methyltetrahydropteroyltriglutamate--homocysteine methyltransferase (764 aa).

Residues 16-19 (RELK) and Lys121 contribute to the 5-methyltetrahydropteroyltri-L-glutamate site. Residues 440–442 (IGS) and Glu493 contribute to the L-homocysteine site. Residues 440–442 (IGS) and Glu493 each bind L-methionine. 5-methyltetrahydropteroyltri-L-glutamate-binding positions include 524-525 (RC) and Trp570. L-homocysteine is bound at residue Asp608. Asp608 lines the L-methionine pocket. Glu614 provides a ligand contact to 5-methyltetrahydropteroyltri-L-glutamate. Residues His650, Cys652, and Glu674 each coordinate Zn(2+). Catalysis depends on His703, which acts as the Proton donor. Cys735 lines the Zn(2+) pocket.

Belongs to the vitamin-B12 independent methionine synthase family. Zn(2+) is required as a cofactor.

The catalysed reaction is 5-methyltetrahydropteroyltri-L-glutamate + L-homocysteine = tetrahydropteroyltri-L-glutamate + L-methionine. It functions in the pathway amino-acid biosynthesis; L-methionine biosynthesis via de novo pathway; L-methionine from L-homocysteine (MetE route): step 1/1. Catalyzes the transfer of a methyl group from 5-methyltetrahydrofolate to homocysteine resulting in methionine formation. This Burkholderia orbicola (strain MC0-3) protein is 5-methyltetrahydropteroyltriglutamate--homocysteine methyltransferase.